We begin with the raw amino-acid sequence, 550 residues long: Chaperonin GroEL (550 aa).

ATP is bound by residues 30–33 (TLGP), K51, 87–91 (DGTTT), G415, 479–481 (NAA), and D495.

It belongs to the chaperonin (HSP60) family. As to quaternary structure, forms a cylinder of 14 subunits composed of two heptameric rings stacked back-to-back. Interacts with the co-chaperonin GroES.

The protein localises to the cytoplasm. The catalysed reaction is ATP + H2O + a folded polypeptide = ADP + phosphate + an unfolded polypeptide.. Functionally, together with its co-chaperonin GroES, plays an essential role in assisting protein folding. The GroEL-GroES system forms a nano-cage that allows encapsulation of the non-native substrate proteins and provides a physical environment optimized to promote and accelerate protein folding. This chain is Chaperonin GroEL, found in Aromatoleum aromaticum (strain DSM 19018 / LMG 30748 / EbN1) (Azoarcus sp. (strain EbN1)).